The primary structure comprises 302 residues: Enolase-phosphatase E1 (302 aa).

Positions 1-10 are enriched in basic residues; that stretch reads MSDSRLRRRQ. Residues 1-25 are disordered; it reads MSDSRLRRRQGTAGTDNKRRADGPH. The span at 16 to 25 shows a compositional bias: basic and acidic residues; it reads DNKRRADGPH. Mg(2+)-binding residues include Asp-40 and Glu-42. Residues 183–184 and Lys-217 each bind substrate; that span reads SS. A Mg(2+)-binding site is contributed by Asp-242.

It belongs to the HAD-like hydrolase superfamily. MasA/MtnC family. In terms of assembly, monomer. Mg(2+) is required as a cofactor.

It is found in the cytoplasm. It localises to the nucleus. It catalyses the reaction 5-methylsulfanyl-2,3-dioxopentyl phosphate + H2O = 1,2-dihydroxy-5-(methylsulfanyl)pent-1-en-3-one + phosphate. Its pathway is amino-acid biosynthesis; L-methionine biosynthesis via salvage pathway; L-methionine from S-methyl-5-thio-alpha-D-ribose 1-phosphate: step 3/6. The protein operates within amino-acid biosynthesis; L-methionine biosynthesis via salvage pathway; L-methionine from S-methyl-5-thio-alpha-D-ribose 1-phosphate: step 4/6. Functionally, bifunctional enzyme that catalyzes the enolization of 2,3-diketo-5-methylthiopentyl-1-phosphate (DK-MTP-1-P) into the intermediate 2-hydroxy-3-keto-5-methylthiopentenyl-1-phosphate (HK-MTPenyl-1-P), which is then dephosphorylated to form the acireductone 1,2-dihydroxy-3-keto-5-methylthiopentene (DHK-MTPene). The chain is Enolase-phosphatase E1 from Branchiostoma floridae (Florida lancelet).